Here is a 208-residue protein sequence, read N- to C-terminus: Putative vomeronasal receptor-like protein 4 (208 aa).

At 1–19 the chain is on the extracellular side; the sequence is MEMTKLFSYIVIKNVYYPQ. Residues 20–40 form a helical membrane-spanning segment; sequence VSFGISANTFLLLFHIFTFAY. The Cytoplasmic segment spans residues 41–48; that stretch reads THRLKPID. The helical transmembrane segment at 49–69 threads the bilayer; it reads MTISHLPLIHILLLFTQAILV. Residues 70–97 are Extracellular-facing; the sequence is SSDLFESWNIQNNDLKCKIITFLNRVMR. An intrachain disulfide couples Cys86 to Cys173. Residues 98 to 118 form a helical membrane-spanning segment; sequence GVSICTTCLLSVLQAITISPS. Topologically, residues 119–135 are cytoplasmic; it reads TSFLEKFKHISANHTLG. A helical transmembrane segment spans residues 136 to 156; that stretch reads FILFSWVLNMFITNNLLLFIV. The Extracellular portion of the chain corresponds to 157–183; it reads PTPNRIGASLLFVTEHCYVLPMSYTHR. The chain crosses the membrane as a helical span at residues 184 to 204; the sequence is SLFFILMVLRDVIFIGLMVLS. Over 205 to 208 the chain is Cytoplasmic; the sequence is SGYG.

The protein belongs to the G-protein coupled receptor 1 family. As to expression, expressed in olfactory nerve.

The protein localises to the cell membrane. Functionally, putative pheromone receptor. In Homo sapiens (Human), this protein is Putative vomeronasal receptor-like protein 4 (VN1R17P).